We begin with the raw amino-acid sequence, 157 residues long: S-ribosylhomocysteine lyase (157 aa).

The Fe cation site is built by His-54, His-58, and Cys-126.

Belongs to the LuxS family. In terms of assembly, homodimer. The cofactor is Fe cation.

It carries out the reaction S-(5-deoxy-D-ribos-5-yl)-L-homocysteine = (S)-4,5-dihydroxypentane-2,3-dione + L-homocysteine. Functionally, involved in the synthesis of autoinducer 2 (AI-2) which is secreted by bacteria and is used to communicate both the cell density and the metabolic potential of the environment. The regulation of gene expression in response to changes in cell density is called quorum sensing. Catalyzes the transformation of S-ribosylhomocysteine (RHC) to homocysteine (HC) and 4,5-dihydroxy-2,3-pentadione (DPD). The chain is S-ribosylhomocysteine lyase from Bacillus licheniformis (strain ATCC 14580 / DSM 13 / JCM 2505 / CCUG 7422 / NBRC 12200 / NCIMB 9375 / NCTC 10341 / NRRL NRS-1264 / Gibson 46).